The primary structure comprises 273 residues: Pantothenate synthetase (273 aa).

Residue 27–34 (MGALHDGH) coordinates ATP. His-34 functions as the Proton donor in the catalytic mechanism. Gln-58 lines the (R)-pantoate pocket. Gln-58 contacts beta-alanine. 144-147 (GKKD) provides a ligand contact to ATP. A (R)-pantoate-binding site is contributed by Gln-150. ATP is bound by residues Val-173 and 181–184 (LSSR).

Belongs to the pantothenate synthetase family. As to quaternary structure, homodimer.

It localises to the cytoplasm. It carries out the reaction (R)-pantoate + beta-alanine + ATP = (R)-pantothenate + AMP + diphosphate + H(+). The protein operates within cofactor biosynthesis; (R)-pantothenate biosynthesis; (R)-pantothenate from (R)-pantoate and beta-alanine: step 1/1. Its function is as follows. Catalyzes the condensation of pantoate with beta-alanine in an ATP-dependent reaction via a pantoyl-adenylate intermediate. The sequence is that of Pantothenate synthetase from Campylobacter concisus (strain 13826).